We begin with the raw amino-acid sequence, 171 residues long: Mitochondrial import inner membrane translocase subunit Tim17-A (171 aa).

A disulfide bond links cysteine 9 and cysteine 78. Helical transmembrane passes span 17 to 37 (CGGA…FKGF), 63 to 77 (GGSF…STID), and 113 to 133 (VGSA…GILL). The disordered stretch occupies residues 147 to 171 (FAEDHSQLPSSQLPSSPFGDYRQYQ). Over residues 153 to 163 (QLPSSQLPSSP) the composition is skewed to low complexity.

Belongs to the Tim17/Tim22/Tim23 family. In terms of assembly, component of the TIM23 complex at least composed of TIMM23, TIMM17 (TIMM17A or TIMM17B) and TIMM50. The complex interacts with the TIMM44 component of the PAM complex and with DNAJC15. Degraded by YMEL1 downstream of the integrated stress response (ISR).

It localises to the mitochondrion inner membrane. Functionally, essential component of the TIM23 complex, a complex that mediates the translocation of transit peptide-containing proteins across the mitochondrial inner membrane. This Rattus norvegicus (Rat) protein is Mitochondrial import inner membrane translocase subunit Tim17-A (Timm17a).